The sequence spans 185 residues: UPF0301 protein IL2218 (185 aa).

It belongs to the UPF0301 (AlgH) family.

This is UPF0301 protein IL2218 from Idiomarina loihiensis (strain ATCC BAA-735 / DSM 15497 / L2-TR).